Reading from the N-terminus, the 768-residue chain is Telomere repeats-binding bouquet formation protein 1 (768 aa).

2 ARM repeats span residues 101-145 and 341-384; these read ELFQ…REVG and NGLP…GQNS. A coiled-coil region spans residues 399–448; it reads ETLREHWKAAKEILCRIKQFEKGGKEEKQQNRSGHYKDNTPSMKVNIQTN. Basic and acidic residues-rich tracts occupy residues 422 to 436 and 461 to 475; these read GKEEKQQNRSGHYKD and RAEDKDINQSRELRS. Disordered stretches follow at residues 422–441 and 454–475; these read GKEEKQQNRSGHYKDNTPSM and ADSTGGTRAEDKDINQSRELRS. Positions 524 to 700 are interaction with TERF1; sequence QNLDKEKTFD…EAMERRSPVP (177 aa). At T648 the chain carries Phosphothreonine. One can recognise a Myb-like domain in the interval 707 to 760; sequence KKRRIRKDFTKEEVNYLFHGVKTMGNHWNSILWSFPFQKGRRAVDLAHKYHRLI.

It belongs to the TERB1 family. As to quaternary structure, component of the MAJIN-TERB1-TERB2 complex, composed of MAJIN, TERB1 and TERB2. Interacts with TERF1, STAG3 and SUN1. Interacts (via Myb-like domain) with the cohesin complex; probably mediated via interaction with STAG3. Post-translationally, phosphorylated by CDK. Phosphorylation by CDK takes place in late prophase when the cap exchange is prominent. is important for the stabilization of telomere attachment but dispenable for the cap exchange. In terms of tissue distribution, expressed in testis and fetal oocytes.

Its subcellular location is the chromosome. It localises to the telomere. It is found in the nucleus inner membrane. Meiosis-specific telomere-associated protein involved in meiotic telomere attachment to the nucleus inner membrane, a crucial step for homologous pairing and synapsis. Component of the MAJIN-TERB1-TERB2 complex, which promotes telomere cap exchange by mediating attachment of telomeric DNA to the inner nuclear membrane and replacement of the protective cap of telomeric chromosomes: in early meiosis, the MAJIN-TERB1-TERB2 complex associates with telomeric DNA and the shelterin/telosome complex. During prophase, the complex matures and promotes release of the shelterin/telosome complex from telomeric DNA. In the MAJIN-TERB1-TERB2 complex, TERB1 probably mediates association with the shelterin/telosome complex via interaction with TERF1, promoting priming telomeric DNA attachment'. Promotes telomere association with the nuclear envelope and deposition of the SUN-KASH/LINC complex. Also recruits cohesin to telomeres to develop structural rigidity. The protein is Telomere repeats-binding bouquet formation protein 1 of Mus musculus (Mouse).